Reading from the N-terminus, the 91-residue chain is Alpha-defensin 31 (91 aa).

Positions 1 to 19 are cleaved as a signal peptide; sequence MKKLVLLFALVLLAFQVQA. Positions 20 to 65 are excised as a propeptide; it reads DSIQNTDEETKTEEQQGEEDQAVSVSFGDPQGSGLQDAALGWGRRC. Residues 22–55 form a disordered region; that stretch reads IQNTDEETKTEEQQGEEDQAVSVSFGDPQGSGLQ. 6 consecutive repeat copies span residues 65-67, 68-70, 71-73, 77-79, 80-82, and 83-85. A 6 X 3 AA tandem repeats of C-P-X region spans residues 65 to 85; that stretch reads CPRCPPCPRCSWCPRCPTCPR.

It belongs to the alpha-defensin family. In terms of tissue distribution, paneth cells of the small bowel.

The protein resides in the secreted. In terms of biological role, apparent precursor of a secreted, cationic, proline- and cysteine-rich peptide that contains Cys-Pro-Xaa repeats. Unlike cryptdin, the proposed mature peptide region lacks the structural motif characteristic of defensins. It may have microbicidal activities. This is Alpha-defensin 31 from Mus musculus (Mouse).